A 365-amino-acid chain; its full sequence is WAT1-related protein At4g01430 (365 aa).

10 consecutive transmembrane segments (helical) span residues 7–27 (WAPVIVMLISSVAMGSVNALV), 39–59 (IFGAYRMAISALILVPFSYIW), 76–96 (FISGLLGASLMQFFFLLGLSY), 100–120 (TVSMALVSMLPAITFALALIF), 132–152 (AGVLKVMGTLICIMGAMLLTF), 183–203 (WLLGCLYLVIGTVLLSLWMLF), 216–236 (YSSTCLMSVFASFQCAILSLY), 250–270 (FVILVTLYAGIVGQAMSTVVT), 280–300 (VFVSTFSPVSLVAATLFDFLI), and 305–325 (LYLGSILGSVVTITGLYVFLW). Residues 20 to 151 (MGSVNALVKK…ICIMGAMLLT (132 aa)) form the EamA 1 domain. The 109-residue stretch at 216–324 (YSSTCLMSVF…VTITGLYVFL (109 aa)) folds into the EamA 2 domain. The segment at 339-365 (LNSSQFSQNKDNEDHTIANHKDTNLPV) is disordered. The segment covering 348-365 (KDNEDHTIANHKDTNLPV) has biased composition (basic and acidic residues).

Belongs to the drug/metabolite transporter (DMT) superfamily. Plant drug/metabolite exporter (P-DME) (TC 2.A.7.4) family.

The protein localises to the membrane. This Arabidopsis thaliana (Mouse-ear cress) protein is WAT1-related protein At4g01430.